The primary structure comprises 98 residues: Large ribosomal subunit protein uL23 (98 aa).

It belongs to the universal ribosomal protein uL23 family. As to quaternary structure, part of the 50S ribosomal subunit. Contacts protein L29, and trigger factor when it is bound to the ribosome.

Its function is as follows. One of the early assembly proteins it binds 23S rRNA. One of the proteins that surrounds the polypeptide exit tunnel on the outside of the ribosome. Forms the main docking site for trigger factor binding to the ribosome. This chain is Large ribosomal subunit protein uL23, found in Sorangium cellulosum (strain So ce56) (Polyangium cellulosum (strain So ce56)).